The sequence spans 135 residues: Flagellar assembly factor FliW 2 (135 aa).

The protein belongs to the FliW family. In terms of assembly, interacts with translational regulator CsrA and flagellin(s).

Its subcellular location is the cytoplasm. Its function is as follows. Acts as an anti-CsrA protein, binds CsrA and prevents it from repressing translation of its target genes, one of which is flagellin. Binds to flagellin and participates in the assembly of the flagellum. This Helicobacter acinonychis (strain Sheeba) protein is Flagellar assembly factor FliW 2.